We begin with the raw amino-acid sequence, 661 residues long: Pentatricopeptide repeat-containing protein At3g04750, mitochondrial (661 aa).

The transit peptide at 1 to 18 directs the protein to the mitochondrion; the sequence is MCFVLLLRRGFRLFGTEC. 13 PPR repeats span residues 99 to 131, 132 to 163, 165 to 195, 196 to 230, 231 to 265, 268 to 298, 299 to 333, 334 to 366, 367 to 401, 402 to 432, 433 to 467, 468 to 498, and 504 to 539; these read NVFV…RVSP, DRQT…GCLS, GNYL…MPHP, DVSS…GIEP, DEYT…GPVY, NLIL…MKKK, DMRS…DLVS, WNSL…KVKP, DRVT…QLKG, DAFL…ATEK, DVAL…GVTP, NNVT…MKDK, and ETEH…PSQS. The interval 540-615 is type E motif; it reads MWGSILSACR…TAGYSSVVGV (76 aa). Residues 616–647 form a type E(+) motif region; the sequence is EGLHRFVAAEKQNHPRWTEIKRILQHLYNEMK.

The protein belongs to the PPR family. PCMP-E subfamily.

Its subcellular location is the mitochondrion. The sequence is that of Pentatricopeptide repeat-containing protein At3g04750, mitochondrial (PCMP-E81) from Arabidopsis thaliana (Mouse-ear cress).